A 316-amino-acid chain; its full sequence is Ribosomal protein L11 methyltransferase (316 aa).

Thr-157, Gly-178, Asp-200, and Asn-243 together coordinate S-adenosyl-L-methionine.

This sequence belongs to the methyltransferase superfamily. PrmA family.

The protein resides in the cytoplasm. It catalyses the reaction L-lysyl-[protein] + 3 S-adenosyl-L-methionine = N(6),N(6),N(6)-trimethyl-L-lysyl-[protein] + 3 S-adenosyl-L-homocysteine + 3 H(+). Its function is as follows. Methylates ribosomal protein L11. The chain is Ribosomal protein L11 methyltransferase from Streptococcus pneumoniae (strain P1031).